We begin with the raw amino-acid sequence, 207 residues long: Chloramphenicol acetyltransferase (207 aa).

His186 acts as the Proton acceptor in catalysis.

The protein belongs to the chloramphenicol acetyltransferase family. Homotrimer.

The enzyme catalyses chloramphenicol + acetyl-CoA = chloramphenicol 3-acetate + CoA. This enzyme is an effector of chloramphenicol resistance in bacteria. This chain is Chloramphenicol acetyltransferase, found in Campylobacter coli.